Consider the following 460-residue polypeptide: Wadjet protein JetA (460 aa).

Functionally, component of antiplasmid transformation system Wadjet type I, composed of JetA, JetB, JetC and JetD. Expression of Wadjet type I in B.subtilis (strain BEST7003) reduces the transformation efficiency of plasmid pHCMC05. The polypeptide is Wadjet protein JetA (Bacillus cereus (strain Q1)).